The following is a 228-amino-acid chain: Claudin-10 (228 aa).

The helical transmembrane segment at 1–21 (MASTASEIIAFMVSISGWVLV) threads the bilayer. Over 22-80 (SSTLPTDYWKVSTIDGTVITTATYWANLWKACVTDSTGVSNCKDFPSMLALDGYIQACR) the chain is Extracellular. A helical membrane pass occupies residues 81-101 (GLMIAAVSLGFFGSIFALFGM). Topologically, residues 102-115 (KCTKVGGSDKAKAK) are cytoplasmic. Residues 116–136 (IACLAGIVFILSGLCSMTGCS) traverse the membrane as a helical segment. Residues 137–160 (LYANKITTEFFDPLFVEQKYELGA) lie on the Extracellular side of the membrane. The chain crosses the membrane as a helical span at residues 161-181 (ALFIGWAGASLCIIGGVIFCF). At 182–228 (SISDNNKTPRYAYNGATSVMSSRTKYHGGEDFKTTNPSKQFDKNAYV) the chain is on the cytoplasmic side.

This sequence belongs to the claudin family. Can form homodimers both in trans (interaction between CLDN10 molecules in opposing membranes) and in cis (interaction between CLDN10 molecules within one membrane). Interacts with CLDN19.

The protein localises to the cell junction. It localises to the tight junction. Its subcellular location is the cell membrane. The catalysed reaction is Na(+)(in) = Na(+)(out). The enzyme catalyses Li(+)(in) = Li(+)(out). It catalyses the reaction K(+)(in) = K(+)(out). It carries out the reaction Rb(+)(in) = Rb(+)(out). The catalysed reaction is Cs(+)(in) = Cs(+)(out). The enzyme catalyses NH4(+)(in) = NH4(+)(out). It catalyses the reaction methylamine(out) = methylamine(in). It carries out the reaction Mg(2+)(in) = Mg(2+)(out). The catalysed reaction is Ca(2+)(in) = Ca(2+)(out). The enzyme catalyses Sr(2+)(in) = Sr(2+)(out). It catalyses the reaction chloride(in) = chloride(out). It carries out the reaction nitrate(in) = nitrate(out). Functionally, forms paracellular channels: polymerizes in tight junction strands with cation- and anion-selective channels through the strands, conveying epithelial permeability in a process known as paracellular tight junction permeability. In sweat glands and in the thick ascending limb (TAL) of Henle's loop in kidney, it controls paracellular sodium permeability which is essential for proper sweat production and renal function. In renal proximal tubules, it conveys selective chloride over hydrogencarbonate anion permeability which is required for renal chloride reabsorption and salt homeostasis. This Pongo abelii (Sumatran orangutan) protein is Claudin-10 (CLDN10).